A 260-amino-acid polypeptide reads, in one-letter code: Sodium channel modifier 1 (260 aa).

The Bipartite nuclear localization signal motif lies at 4-20 (KRDGDDSSQLNVLKKRR). The Matrin-type zinc-finger motif lies at 42 to 74 (YACTVCHHRPVFNTIDMLSVHRTGKKHLGGLQR). Residues 143–260 (RNVYDPHSGP…EEEPPALPPS (118 aa)) form a disordered region. Positions 166–187 (PGPSQPHTSLHSPPTGPCSSPT) are enriched in polar residues. Basic and acidic residues predominate over residues 202 to 221 (KGEEKFRKEIADPERERNME). Positions 245–254 (VEFDSDEEEP) are enriched in acidic residues.

In terms of assembly, component of the minor spliceosome, which splices U12-type introns.

It localises to the nucleus. It is found in the nucleoplasm. Its subcellular location is the nucleus speckle. As a component of the minor spliceosome, involved in the splicing of U12-type introns in pre-mRNAs. The chain is Sodium channel modifier 1 (scnm1) from Xenopus laevis (African clawed frog).